A 420-amino-acid polypeptide reads, in one-letter code: Acetylornithine aminotransferase (420 aa).

Residues 118-119 and Phe-151 each bind pyridoxal 5'-phosphate; that span reads GA. Arg-154 provides a ligand contact to N(2)-acetyl-L-ornithine. 242-245 provides a ligand contact to pyridoxal 5'-phosphate; it reads DEVQ. Lys-271 is modified (N6-(pyridoxal phosphate)lysine). Ser-298 contacts N(2)-acetyl-L-ornithine. Pyridoxal 5'-phosphate is bound at residue Thr-299.

Belongs to the class-III pyridoxal-phosphate-dependent aminotransferase family. ArgD subfamily. Homodimer. Requires pyridoxal 5'-phosphate as cofactor.

Its subcellular location is the cytoplasm. It catalyses the reaction N(2)-acetyl-L-ornithine + 2-oxoglutarate = N-acetyl-L-glutamate 5-semialdehyde + L-glutamate. Its pathway is amino-acid biosynthesis; L-arginine biosynthesis; N(2)-acetyl-L-ornithine from L-glutamate: step 4/4. This is Acetylornithine aminotransferase from Parasynechococcus marenigrum (strain WH8102).